A 361-amino-acid polypeptide reads, in one-letter code: tRNA-specific 2-thiouridylase MnmA (361 aa).

ATP contacts are provided by residues 8-15 (AMSGGVDS) and Met35. The tract at residues 95-97 (NPD) is interaction with target base in tRNA. The active-site Nucleophile is Cys100. Cys100 and Cys196 are oxidised to a cystine. Position 124 (Gly124) interacts with ATP. Residues 146-148 (KDQ) form an interaction with tRNA region. Residue Cys196 is the Cysteine persulfide intermediate of the active site. The tract at residues 303–304 (RY) is interaction with tRNA.

It belongs to the MnmA/TRMU family.

It localises to the cytoplasm. It carries out the reaction S-sulfanyl-L-cysteinyl-[protein] + uridine(34) in tRNA + AH2 + ATP = 2-thiouridine(34) in tRNA + L-cysteinyl-[protein] + A + AMP + diphosphate + H(+). Its function is as follows. Catalyzes the 2-thiolation of uridine at the wobble position (U34) of tRNA, leading to the formation of s(2)U34. In Chlamydia pneumoniae (Chlamydophila pneumoniae), this protein is tRNA-specific 2-thiouridylase MnmA.